The following is a 329-amino-acid chain: Mas-related G-protein coupled receptor member X2 (329 aa).

Over 1-33 (MDPTTPAWGTESTTMNGNDQALPLFCGKETLIS) the chain is Extracellular. The helical transmembrane segment at 34-54 (VFLILFIALVGLVGNGFVLWL) threads the bilayer. Residues 55 to 63 (LGFRMRKNA) lie on the Cytoplasmic side of the membrane. A helical membrane pass occupies residues 64–84 (FSVYVLSLAGADFLFLCFQII). Over 85 to 96 (NCLVYLSNVFCS) the chain is Extracellular. A helical transmembrane segment spans residues 97–117 (ISINFPSFFITVMTCAYLAGL). Topologically, residues 118–144 (SMLSTISTERCLSVLWPIWYRCRRPRH) are cytoplasmic. The chain crosses the membrane as a helical span at residues 145 to 165 (LSAVACVLLWALSLLLSILEG). Residues 166 to 183 (KFCGLFGDGDSGWCQTFD) lie on the Extracellular side of the membrane. Residues 184 to 204 (LITAAWLIFLFMVLCGSSLAL) form a helical membrane-spanning segment. Over 205–227 (LVRILCGSRGLPLTRLYLTILLT) the chain is Cytoplasmic. A helical membrane pass occupies residues 228-248 (VLVFLLCGLPFGIQWFLILWI). Topologically, residues 249–263 (WKNSDVLFCHIHPVS) are extracellular. Residues 264-284 (VVLSSLNSSANPIIYFFVGSF) form a helical membrane-spanning segment. Residues 285-329 (RKQWRLQQPILKLALQRALQDIAEVDHSEGCFRQGTPEMSRSSLV) lie on the Cytoplasmic side of the membrane.

Belongs to the G-protein coupled receptor 1 family. Mas subfamily.

It localises to the cell membrane. Its function is as follows. Mast cell-specific receptor for basic secretagogues, i.e. cationic amphiphilic drugs, as well as endo- or exogenous peptides, consisting of a basic head group and a hydrophobic core. Recognizes and binds small molecules containing a cyclized tetrahydroisoquinoline (THIQ), such as non-steroidal neuromuscular blocking drugs (NMBDs), including tubocurarine and atracurium. In response to these compounds, mediates pseudo-allergic reactions characterized by histamine release, inflammation and airway contraction. This chain is Mas-related G-protein coupled receptor member X2 (MRGPRX2), found in Pan troglodytes (Chimpanzee).